Here is a 237-residue protein sequence, read N- to C-terminus: Lectin (237 aa).

The N-linked (GlcNAc...) asparagine glycan is linked to N69. Blocked amino end (Ile) is present on I106. Positions 115 and 117 each coordinate Mn(2+). The Ca(2+) site is built by D117, Y120, N122, and D127. Residues D127 and H132 each coordinate Mn(2+).

Belongs to the leguminous lectin family. In terms of assembly, tetramer of two alpha and two beta chains. Post-translationally, the N-terminus of alpha chain is blocked. The alpha and beta chains are produced by proteolytic processing, with probably the loss of intervening amino acid(s).

Its function is as follows. D-mannose/D-glucose-binding lectin. Requires Ca(2+) and Mn(2+) ions for full activity. The chain is Lectin from Lablab purpureus (Hyacinth bean).